Consider the following 61-residue polypeptide: MAKKTLKVTQYKSASGRLEAHKACVRGLGLRRIGHTVEVEDTPSVRGMINKVNYMVKVEEE.

It belongs to the universal ribosomal protein uL30 family. Part of the 50S ribosomal subunit.

The polypeptide is Large ribosomal subunit protein uL30 (Teredinibacter turnerae (strain ATCC 39867 / T7901)).